A 712-amino-acid chain; its full sequence is Translation initiation factor eIF2B subunit epsilon (712 aa).

Residues 1–20 are disordered; sequence MAGKKGQKKSGLGNHGKNSD. Phosphoserine occurs at positions 478, 481, 507, 525, 538, and 707. Positions 539–710 constitute a W2 domain; it reads EFEDEDFEKE…QNADEESSSE (172 aa).

Belongs to the eIF-2B gamma/epsilon subunits family. In terms of assembly, component of the translation initiation factor 2B (eIF2B) complex which is a heterodecamer of two sets of five different subunits: alpha, beta, gamma, delta and epsilon. Subunits alpha, beta and delta comprise a regulatory subcomplex and subunits epsilon and gamma comprise a catalytic subcomplex. Within the complex, the hexameric regulatory complex resides at the center, with the two heterodimeric catalytic subcomplexes bound on opposite sides.

Its subcellular location is the cytoplasm. The protein localises to the cytosol. Functionally, acts as a catalytic component of the translation initiation factor 2B (eIF2B) complex, which catalyzes the exchange of GDP for GTP on eukaryotic initiation factor 2 (eIF2) and is regulated by phosphorylated eIF2. Its guanine nucleotide exchange factor activity is repressed when bound to eIF2 complex phosphorylated on the alpha subunit, thereby limiting the amount of methionyl-initiator methionine tRNA available to the ribosome and consequently global translation is repressed. It activates the synthesis of GCN4 in yeast under amino acid starvation conditions by suppressing the inhibitory effects of multiple AUG codons present in the leader of GCN4 mRNA. It may promote either repression or activation of GCN4 expression depending on amino acid availability. GCD6 and GCD7 repress GCN4 expression at the translational level by ensuring that ribosomes which have translated UORF1 will reinitiate at UORF2, -3, or -4 and thus fail to reach the GCN4 start site. This Saccharomyces cerevisiae (strain ATCC 204508 / S288c) (Baker's yeast) protein is Translation initiation factor eIF2B subunit epsilon (GCD6).